Here is a 158-residue protein sequence, read N- to C-terminus: Transcription elongation factor GreA (158 aa).

A coiled-coil region spans residues Glu47–Ala75.

The protein belongs to the GreA/GreB family.

In terms of biological role, necessary for efficient RNA polymerase transcription elongation past template-encoded arresting sites. The arresting sites in DNA have the property of trapping a certain fraction of elongating RNA polymerases that pass through, resulting in locked ternary complexes. Cleavage of the nascent transcript by cleavage factors such as GreA or GreB allows the resumption of elongation from the new 3'terminus. GreA releases sequences of 2 to 3 nucleotides. In Oceanobacillus iheyensis (strain DSM 14371 / CIP 107618 / JCM 11309 / KCTC 3954 / HTE831), this protein is Transcription elongation factor GreA.